Reading from the N-terminus, the 436-residue chain is tRNA-2-methylthio-N(6)-dimethylallyladenosine synthase (436 aa).

The MTTase N-terminal domain occupies 5-121 (RKLFIKTYGC…LPDMLDRTEG (117 aa)). [4Fe-4S] cluster-binding residues include C14, C50, C84, C158, C162, and C165. Residues 144–374 (ATRGPAAFLT…TEQQRAAQMA (231 aa)) form the Radical SAM core domain. A TRAM domain is found at 373–435 (MAMVGREVGV…PNSLAGERLG (63 aa)).

It belongs to the methylthiotransferase family. MiaB subfamily. Monomer. [4Fe-4S] cluster serves as cofactor.

It is found in the cytoplasm. It catalyses the reaction N(6)-dimethylallyladenosine(37) in tRNA + (sulfur carrier)-SH + AH2 + 2 S-adenosyl-L-methionine = 2-methylsulfanyl-N(6)-dimethylallyladenosine(37) in tRNA + (sulfur carrier)-H + 5'-deoxyadenosine + L-methionine + A + S-adenosyl-L-homocysteine + 2 H(+). In terms of biological role, catalyzes the methylthiolation of N6-(dimethylallyl)adenosine (i(6)A), leading to the formation of 2-methylthio-N6-(dimethylallyl)adenosine (ms(2)i(6)A) at position 37 in tRNAs that read codons beginning with uridine. This chain is tRNA-2-methylthio-N(6)-dimethylallyladenosine synthase, found in Cereibacter sphaeroides (strain ATCC 17029 / ATH 2.4.9) (Rhodobacter sphaeroides).